Consider the following 191-residue polypeptide: Large ribosomal subunit protein bL9 (191 aa).

Residues 149–191 (EEAERQSKGESLTSADAIYGVDEDALRPEDFFDPEADGNEDDE) form a disordered region. A compositionally biased stretch (acidic residues) spans 179 to 191 (FFDPEADGNEDDE).

Belongs to the bacterial ribosomal protein bL9 family.

Its function is as follows. Binds to the 23S rRNA. In Agrobacterium fabrum (strain C58 / ATCC 33970) (Agrobacterium tumefaciens (strain C58)), this protein is Large ribosomal subunit protein bL9 (rplI).